Reading from the N-terminus, the 261-residue chain is Oxidoreductase ptaF (261 aa).

It belongs to the avfA family.

The protein operates within secondary metabolite biosynthesis. Its function is as follows. Oxidoreductase; part of the gene cluster that mediates the biosynthesis of pestheic acid, a diphenyl ether which is a biosynthetic precursor of the unique chloropupukeananes. The biosynthesis initiates from condensation of acetate and malonate units catalyzed by the non-reducing PKS ptaA. As the ptaA protein is TE/CLC domain-deficient, hydrolysis and Claisen cyclization of the polyketide could be catalyzed by ptaB containing a beta-lactamase domain. The ptaB protein might hydrolyze the thioester bond between the ACP of ptaA and the intermediate to release atrochrysone carboxylic acid, which is spontaneously dehydrated to form endocrocin anthrone. Endocrocin anthrone is then converted to endocrocin, catalyzed by the anthrone oxygenase ptaC. Spontaneous decarboxylation of endocrocin occurs to generate emodin. An O-methyltransferase (ptaH or ptaI) could methylate emodin to form physcion. PtaJ could then catalyze the oxidative cleavage of physcion, and rotation of the intermediate could then afford desmethylisosulochrin. PtaF, a putative NADH-dependent oxidoreductase, might also participate in the oxidative cleavage step. Desmethylisosulochrin is then transformed by another O-methyltransferase (ptaH or ptaI) to form isosulochrin. Chlorination of isosulochrin by ptaM in the cyclohexadienone B ring then produces chloroisosulochrin. PtaE is responsible for the oxidative coupling reactions of both benzophenones isosulouchrin and chloroisosulochrin to RES-1214-1 and pestheic acid respectively, regardless of chlorination. This chain is Oxidoreductase ptaF, found in Pestalotiopsis fici (strain W106-1 / CGMCC3.15140).